The following is a 612-amino-acid chain: FAD-linked oxidoreductase notD' (612 aa).

Residues 1–19 (MRDIRELLLVLFTSCLALG) form the signal peptide. 3 N-linked (GlcNAc...) asparagine glycosylation sites follow: asparagine 50, asparagine 86, and asparagine 109. Residues 124 to 307 (GQGRIPRYSA…TSITMPVFGA (184 aa)) enclose the FAD-binding PCMH-type domain. Asparagine 311 and asparagine 396 each carry an N-linked (GlcNAc...) asparagine glycan.

It belongs to the oxygen-dependent FAD-linked oxidoreductase family. FAD serves as cofactor.

Its pathway is alkaloid biosynthesis. In terms of biological role, FAD-linked oxidoreductase; part of the gene cluster that mediates the biosynthesis of notoamide, a fungal indole alkaloid that belongs to a family of natural products containing a characteristic bicyclo[2.2.2]diazaoctane core. The first step of notoamide biosynthesis involves coupling of L-proline and L-tryptophan by the bimodular NRPS notE', to produce cyclo-L-tryptophan-L-proline called brevianamide F. The reverse prenyltransferase notF' then acts as a deoxybrevianamide E synthase and converts brevianamide F to deoxybrevianamide E via reverse prenylation at C-2 of the indole ring leading to the bicyclo[2.2.2]diazaoctane core. Deoxybrevianamide E is further hydroxylated at C-6 of the indole ring, likely catalyzed by the cytochrome P450 monooxygenase notG', to yield 6-hydroxy-deoxybrevianamide E. 6-hydroxy-deoxybrevianamide E is a specific substrate of the prenyltransferase notC' for normal prenylation at C-7 to produce 6-hydroxy-7-prenyl-deoxybrevianamide, also called notoamide S. As the proposed pivotal branching point in notoamide biosynthesis, notoamide S can be diverted to notoamide E through an oxidative pyran ring closure putatively catalyzed by either notH' cytochrome P450 monooxygenase or the notD' FAD-linked oxidoreductase. This step would be followed by an indole 2,3-epoxidation-initiated pinacol-like rearrangement catalyzed by the notB' FAD-dependent monooxygenase leading to the formation of notoamide C and notoamide D. On the other hand notoamide S is converted to notoamide T by notH' (or notD'), a bifunctional oxidase that also functions as the intramolecular Diels-Alderase responsible for generation of (-)-notoamide T. To generate antipodal (+)-notoaminide T, notH (or notD) in Aspergillus strain MF297-2 is expected to catalyze a Diels-Alder reaction leading to the opposite stereochemistry. The remaining oxidoreductase notD' (or notH') likely catalyzes the oxidative pyran ring formation to yield (-)-stephacidin A. The FAD-dependent monooxygenase notI' is highly similar to notB' and is predicted to catalyze a similar conversion from (-)-stephacidin A to (+)-notoamide B via the 2,3-epoxidation of (-)-stephacidin A followed by a pinacol-type rearrangement. Finally, it remains unclear which enzyme could be responsible for the final hydroxylation steps leading to notoamide A and sclerotiamide. In Aspergillus versicolor, this protein is FAD-linked oxidoreductase notD'.